A 354-amino-acid polypeptide reads, in one-letter code: Ornithine transcarbamylase, mitochondrial (354 aa).

The N-terminal 32 residues, 1–32 (MLFHLRTLLNNAALRNGHNFVVRNFRCGQPLQ), are a transit peptide targeting the mitochondrion. An N6-acetyllysine; alternate modification is found at Lys-70. An N6-succinyllysine; alternate modification is found at Lys-70. Residue Lys-80 is modified to N6-succinyllysine. Lys-88 carries the N6-acetyllysine; alternate modification. At Lys-88 the chain carries N6-succinyllysine; alternate. Position 133 is a phosphoserine (Ser-133). Lys-144, Lys-221, Lys-231, and Lys-238 each carry N6-acetyllysine; alternate. N6-succinyllysine; alternate is present on residues Lys-144, Lys-221, Lys-231, and Lys-238. Lys-243 bears the N6-acetyllysine mark. Asp-263 is a catalytic residue. Residues Lys-274 and Lys-289 each carry the N6-succinyllysine modification. Residue Lys-292 is modified to N6-acetyllysine; alternate. Lys-292 carries the post-translational modification N6-succinyllysine; alternate. Residue Cys-303 is part of the active site. Lys-307 is modified (N6-acetyllysine; alternate). An N6-succinyllysine; alternate modification is found at Lys-307.

Belongs to the aspartate/ornithine carbamoyltransferase superfamily. OTCase family. As to quaternary structure, homotrimer. Acetylation at Lys-88 negatively regulates ornithine carbamoyltransferase activity in response to nutrient signals.

The protein resides in the mitochondrion matrix. It catalyses the reaction carbamoyl phosphate + L-ornithine = L-citrulline + phosphate + H(+). It functions in the pathway nitrogen metabolism; urea cycle; L-citrulline from L-ornithine and carbamoyl phosphate: step 1/1. With respect to regulation, negatively regulated by lysine acetylation. In terms of biological role, catalyzes the second step of the urea cycle, the condensation of carbamoyl phosphate with L-ornithine to form L-citrulline. The urea cycle ensures the detoxification of ammonia by converting it to urea for excretion. This is Ornithine transcarbamylase, mitochondrial from Bos taurus (Bovine).